A 228-amino-acid chain; its full sequence is Thiamine-phosphate synthase (228 aa).

4-amino-2-methyl-5-(diphosphooxymethyl)pyrimidine contacts are provided by residues 57–61 (QLRDK) and Asn89. Mg(2+) is bound by residues Asp90 and Asp109. Ser128 contributes to the 4-amino-2-methyl-5-(diphosphooxymethyl)pyrimidine binding site. 154 to 156 (TPS) provides a ligand contact to 2-[(2R,5Z)-2-carboxy-4-methylthiazol-5(2H)-ylidene]ethyl phosphate. Lys157 provides a ligand contact to 4-amino-2-methyl-5-(diphosphooxymethyl)pyrimidine. Residues Gly185 and 205 to 206 (IS) contribute to the 2-[(2R,5Z)-2-carboxy-4-methylthiazol-5(2H)-ylidene]ethyl phosphate site.

It belongs to the thiamine-phosphate synthase family. Mg(2+) is required as a cofactor.

The catalysed reaction is 2-[(2R,5Z)-2-carboxy-4-methylthiazol-5(2H)-ylidene]ethyl phosphate + 4-amino-2-methyl-5-(diphosphooxymethyl)pyrimidine + 2 H(+) = thiamine phosphate + CO2 + diphosphate. It carries out the reaction 2-(2-carboxy-4-methylthiazol-5-yl)ethyl phosphate + 4-amino-2-methyl-5-(diphosphooxymethyl)pyrimidine + 2 H(+) = thiamine phosphate + CO2 + diphosphate. It catalyses the reaction 4-methyl-5-(2-phosphooxyethyl)-thiazole + 4-amino-2-methyl-5-(diphosphooxymethyl)pyrimidine + H(+) = thiamine phosphate + diphosphate. Its pathway is cofactor biosynthesis; thiamine diphosphate biosynthesis; thiamine phosphate from 4-amino-2-methyl-5-diphosphomethylpyrimidine and 4-methyl-5-(2-phosphoethyl)-thiazole: step 1/1. Condenses 4-methyl-5-(beta-hydroxyethyl)thiazole monophosphate (THZ-P) and 2-methyl-4-amino-5-hydroxymethyl pyrimidine pyrophosphate (HMP-PP) to form thiamine monophosphate (TMP). The polypeptide is Thiamine-phosphate synthase (Roseiflexus castenholzii (strain DSM 13941 / HLO8)).